We begin with the raw amino-acid sequence, 526 residues long: Cytochrome P450 4F5 (526 aa).

Cysteine 470 lines the heme pocket.

The protein belongs to the cytochrome P450 family. Heme is required as a cofactor. In terms of tissue distribution, high expression in liver and kidney. Lower expression in brain.

The protein localises to the endoplasmic reticulum membrane. It is found in the microsome membrane. It catalyses the reaction an organic molecule + reduced [NADPH--hemoprotein reductase] + O2 = an alcohol + oxidized [NADPH--hemoprotein reductase] + H2O + H(+). This chain is Cytochrome P450 4F5 (Cyp4f5), found in Rattus norvegicus (Rat).